Here is a 311-residue protein sequence, read N- to C-terminus: MLSARNSMMFGHLSPVRIPRLRGKFNLQLPSLDEQVIPARLLKMEVRAEEPKEATEVKDQVETQGQEDNKMGPCSNGEAASTSRPLETQGNLTSSWYNPRPLEGNVHLKSLTEKNQTDKAQVHAVSFYSKGHGVASSHSPAGGILPFGKPDPLPTVLPAPVPGCSLWPEKAALKVLGKDHLPSSPGLLMVGEDMQPKDPAVLGSSRSSPPRAAGHRSRKRKLSGPPLQLQLTPPLQLRWDRDGGPPPAKLPCLSPEALLVGQASQREGRLQQGNMRKNMRVLSRTSKFRRRKQLLRRRKKTRQGRRGGSCL.

The segment covering 48–61 (AEEPKEATEVKDQV) has biased composition (basic and acidic residues). Disordered stretches follow at residues 48–99 (AEEP…WYNP), 186–229 (GLLM…PLQL), and 291–311 (RKQL…GSCL). Positions 78-97 (EAASTSRPLETQGNLTSSWY) are enriched in polar residues. Composition is skewed to basic residues over residues 213 to 222 (AGHRSRKRKL) and 291 to 305 (RKQL…RQGR).

The protein belongs to the UPF0607 family.

The sequence is that of Putative UPF0607 protein ENSP00000382826 from Homo sapiens (Human).